A 393-amino-acid chain; its full sequence is tRNA (guanine-N(7)-)-methyltransferase (393 aa).

Glu-124, Glu-149, and Asp-176 together coordinate S-adenosyl-L-methionine. Residue Asp-232 coordinates substrate.

The protein belongs to the class I-like SAM-binding methyltransferase superfamily. TrmB family.

The enzyme catalyses guanosine(46) in tRNA + S-adenosyl-L-methionine = N(7)-methylguanosine(46) in tRNA + S-adenosyl-L-homocysteine. Its pathway is tRNA modification; N(7)-methylguanine-tRNA biosynthesis. In terms of biological role, catalyzes the formation of N(7)-methylguanine at position 46 (m7G46) in tRNA. The polypeptide is tRNA (guanine-N(7)-)-methyltransferase (Helicobacter pylori (strain ATCC 700392 / 26695) (Campylobacter pylori)).